The primary structure comprises 384 residues: Chorismate synthase (384 aa).

Residues arginine 40 and arginine 46 each coordinate NADP(+). Residues 127 to 129 (RTS), 247 to 248 (QA), alanine 292, 307 to 311 (KPIPT), and arginine 333 each bind FMN.

Belongs to the chorismate synthase family. As to quaternary structure, homotetramer. Requires FMNH2 as cofactor.

The enzyme catalyses 5-O-(1-carboxyvinyl)-3-phosphoshikimate = chorismate + phosphate. Its pathway is metabolic intermediate biosynthesis; chorismate biosynthesis; chorismate from D-erythrose 4-phosphate and phosphoenolpyruvate: step 7/7. Functionally, catalyzes the anti-1,4-elimination of the C-3 phosphate and the C-6 proR hydrogen from 5-enolpyruvylshikimate-3-phosphate (EPSP) to yield chorismate, which is the branch point compound that serves as the starting substrate for the three terminal pathways of aromatic amino acid biosynthesis. This reaction introduces a second double bond into the aromatic ring system. This Alkaliphilus oremlandii (strain OhILAs) (Clostridium oremlandii (strain OhILAs)) protein is Chorismate synthase.